Reading from the N-terminus, the 494-residue chain is MMKSLLFSAHPTSLLLPAPRLRRLLRLRAASSASASAPPRADRRSPGTPSRRPSSSLYARPSLLDMERDRATRRADVDAFLTSLGVDPGELAGLELPVTVDVMRERAEFLGSLGLTQEDLAAYPLALGCSVRKNMVPVLDYLGKLGVRRDALPDLLRRYPQVLHASVVVDLAPVVKYLQGMDVRPTDVPRVLERYPELLGFKLEGTMSTSVAYLVGIGVGRRQVGSVITRFPEVLGMRVGKIIKPFVEHLEGIGLQRLAIARIIEKKPYVLGFGLQEKVKPNIEALVDIGVRKEALASIVMQYPDVLGLELRDKLVAQQSLFESSILVSREDFGRVLERMPQAISLGRAAVLKHVNFLTACGFMLSQVSKMVVACPQLLALNIDIMRMNFEYFKNEMERDLEELVEFPAFFTYGIESTVRPRHEMVSRKGLTCSLAWLLNCSDAKFDERMKYDTIGVEEMEREDSSDMNASVDEVESEEYEDSDYGDSDDEFVR.

Residues 1–54 (MMKSLLFSAHPTSLLLPAPRLRRLLRLRAASSASASAPPRADRRSPGTPSRRPS) constitute a chloroplast transit peptide. Disordered stretches follow at residues 32–61 (SASA…YARP) and 457–494 (VEEM…EFVR). Positions 46-56 (PGTPSRRPSSS) are enriched in low complexity. Acidic residues-rich tracts occupy residues 457 to 466 (VEEMEREDSS) and 473 to 494 (DEVE…EFVR).

It belongs to the mTERF family.

The protein resides in the plastid. It is found in the chloroplast stroma. Transcription termination factor required for processing and steady-state levels of plastid transcripts. Required for splicing of the chloroplastic group II intron. Required for the accumulation of 16S and 23S ribosomes. This is Transcription termination factor MTERF4, chloroplastic from Zea mays (Maize).